The sequence spans 275 residues: Phosphite import ATP-binding protein PxtA (275 aa).

The ABC transporter domain occupies 11-252 (LRVDRLSVVY…QLERIYAGRS (242 aa)). 44-51 (GLSGAGKS) contacts ATP. The tract at residues 251–275 (RSTTQPANAPAEPPVMLEPSLEMSR) is disordered.

The protein belongs to the ABC transporter superfamily. Phosphonates importer (TC 3.A.1.9.1) family. The complex is composed of two ATP-binding proteins (PtxA), two transmembrane proteins (PtxC) and a solute-binding protein (PtxB).

The protein localises to the cell inner membrane. The enzyme catalyses phosphite(out) + ATP + H2O = phosphite(in) + ADP + phosphate + H(+). Its function is as follows. Part of the ABC transporter complex PtxABC involved in phosphite import. Responsible for energy coupling to the transport system. The polypeptide is Phosphite import ATP-binding protein PxtA (ptxA) (Stutzerimonas stutzeri (Pseudomonas stutzeri)).